The sequence spans 240 residues: DNA repair protein RecO (240 aa).

Belongs to the RecO family.

Functionally, involved in DNA repair and RecF pathway recombination. This chain is DNA repair protein RecO, found in Actinobacillus pleuropneumoniae serotype 7 (strain AP76).